Here is a 284-residue protein sequence, read N- to C-terminus: ELMO domain-containing protein B (284 aa).

Positions Glu-124–Ser-276 constitute an ELMO domain.

In Dictyostelium discoideum (Social amoeba), this protein is ELMO domain-containing protein B (elmoB).